The primary structure comprises 169 residues: Shikimate kinase (169 aa).

12–17 (AVGKTT) is an ATP binding site. Residue Thr-16 participates in Mg(2+) binding. 3 residues coordinate substrate: Asp-34, Arg-58, and Gly-80. Arg-119 lines the ATP pocket. Arg-139 contacts substrate. Arg-156 contributes to the ATP binding site.

Belongs to the shikimate kinase family. In terms of assembly, monomer. Mg(2+) is required as a cofactor.

The protein resides in the cytoplasm. It carries out the reaction shikimate + ATP = 3-phosphoshikimate + ADP + H(+). It participates in metabolic intermediate biosynthesis; chorismate biosynthesis; chorismate from D-erythrose 4-phosphate and phosphoenolpyruvate: step 5/7. In terms of biological role, catalyzes the specific phosphorylation of the 3-hydroxyl group of shikimic acid using ATP as a cosubstrate. This is Shikimate kinase from Alkaliphilus oremlandii (strain OhILAs) (Clostridium oremlandii (strain OhILAs)).